The primary structure comprises 462 residues: A-type ATP synthase subunit B (462 aa).

It belongs to the ATPase alpha/beta chains family. In terms of assembly, has multiple subunits with at least A(3), B(3), C, D, E, F, H, I and proteolipid K(x).

It is found in the cell membrane. In terms of biological role, component of the A-type ATP synthase that produces ATP from ADP in the presence of a proton gradient across the membrane. The B chain is a regulatory subunit. This Cenarchaeum symbiosum (strain A) protein is A-type ATP synthase subunit B.